The primary structure comprises 1053 residues: Zinc finger and BTB domain-containing protein 11 (1053 aa).

A compositionally biased stretch (acidic residues) spans 141–156; it reads LDLESGEESNESEDDL. Residues 141 to 173 are disordered; that stretch reads LDLESGEESNESEDDLSNFTSSPTTASKPAKKK. The span at 157–168 shows a compositional bias: low complexity; sequence SNFTSSPTTASK. The BTB domain maps to 214 to 282; that stretch reads CDVTLLIEGE…AYTSVLSFDF (69 aa). The disordered stretch occupies residues 546-566; it reads LVQRGKKMKQPKRDAKENTEE. Positions 556–566 are enriched in basic and acidic residues; sequence PKRDAKENTEE. 2 C2H2-type zinc fingers span residues 569–591 and 597–619; these read HKCGECGMVFQRRYALIMHKLKH and YKCPLCKKQFQYSASLRAHLIRH. Positions 619 to 643 are disordered; sequence HTRKDAPSSSSSNSTSNEASGTSSE. The span at 626-642 shows a compositional bias: low complexity; the sequence is SSSSSNSTSNEASGTSS. 10 consecutive C2H2-type zinc fingers follow at residues 651–673, 679–701, 707–729, 735–757, 766–788, 794–816, 822–846, 858–880, 886–908, and 914–937; these read FICSICGRTLPKLYSLRIHMLKH, HACQVCGKTFIYKHGLKLHQSLH, FQCELCVKSFVTKRSLQEHMSIH, YLCSVCGKSFHRGSGLSKHFKKH, YHCTQCEKSFFEARDLRQHMNKH, FQCQFCDKCYSWKKDWYSHVKSH, YRCNICGKEFYEKALFRRHVKKATH, RVCEKCGRKFTQLREYRRHMNNH, FECLTCGVAWADARSLKRHVRTH, and YVCPVCSEAYIDARTLRKHMTKFH. Residue K1043 forms a Glycyl lysine isopeptide (Lys-Gly) (interchain with G-Cter in SUMO2) linkage. S1050 carries the post-translational modification Phosphoserine.

The protein resides in the nucleus. It localises to the nucleolus. Its function is as follows. May be involved in transcriptional regulation. In Homo sapiens (Human), this protein is Zinc finger and BTB domain-containing protein 11.